Consider the following 376-residue polypeptide: Phospho-N-acetylmuramoyl-pentapeptide-transferase (376 aa).

The next 10 helical transmembrane spans lie at R28–I48, T76–L96, F100–F120, Y135–A155, Y179–T199, G211–V231, A252–Y272, V279–F299, I307–F327, and K353–M373.

This sequence belongs to the glycosyltransferase 4 family. MraY subfamily. Mg(2+) serves as cofactor.

Its subcellular location is the cell inner membrane. It carries out the reaction UDP-N-acetyl-alpha-D-muramoyl-L-alanyl-gamma-D-glutamyl-meso-2,6-diaminopimeloyl-D-alanyl-D-alanine + di-trans,octa-cis-undecaprenyl phosphate = di-trans,octa-cis-undecaprenyl diphospho-N-acetyl-alpha-D-muramoyl-L-alanyl-D-glutamyl-meso-2,6-diaminopimeloyl-D-alanyl-D-alanine + UMP. It participates in cell wall biogenesis; peptidoglycan biosynthesis. Functionally, catalyzes the initial step of the lipid cycle reactions in the biosynthesis of the cell wall peptidoglycan: transfers peptidoglycan precursor phospho-MurNAc-pentapeptide from UDP-MurNAc-pentapeptide onto the lipid carrier undecaprenyl phosphate, yielding undecaprenyl-pyrophosphoryl-MurNAc-pentapeptide, known as lipid I. This Sorangium cellulosum (strain So ce56) (Polyangium cellulosum (strain So ce56)) protein is Phospho-N-acetylmuramoyl-pentapeptide-transferase.